Consider the following 300-residue polypeptide: Jacalin-related lectin 33 (300 aa).

The tract at residues 1–20 is disordered; it reads MAQKVEAGGGAGGASWDDGV. A2 carries the post-translational modification N-acetylalanine. 2 Jacalin-type lectin domains span residues 2–146 and 154–297; these read AQKV…YFAT and AKKL…HVMP.

It belongs to the jacalin lectin family. In terms of assembly, component of the PYK10 complex, at least composed of PYK10/BGLU23, BGLU21, BGLU22, JAL22, JAL23, PBP1/JAL30, PBP2/JAL31, JAL32, JAL33, JAL34, JAL35, GLL22 and GLL23.

Its function is as follows. Sugar-binding protein showing significant affinity for (Glc alpha(1-4)Glc)(3) maltohexaose, (Glc alpha(1-6)Glc)(3) isomaltohexaose, Gal alpha(1-4)Gal beta(1-4)Glc, GalNAc alpha(1-3)(Fuc alpha(1-2)) and Gal beta(1-3)(Fuc alpha(1-4))GlcNAc beta(1-3)Gal beta(1-4)Glc. The chain is Jacalin-related lectin 33 (JAL33) from Arabidopsis thaliana (Mouse-ear cress).